A 367-amino-acid chain; its full sequence is S-adenosylmethionine:tRNA ribosyltransferase-isomerase (367 aa).

This sequence belongs to the QueA family. As to quaternary structure, monomer.

The protein resides in the cytoplasm. The enzyme catalyses 7-aminomethyl-7-carbaguanosine(34) in tRNA + S-adenosyl-L-methionine = epoxyqueuosine(34) in tRNA + adenine + L-methionine + 2 H(+). It functions in the pathway tRNA modification; tRNA-queuosine biosynthesis. Transfers and isomerizes the ribose moiety from AdoMet to the 7-aminomethyl group of 7-deazaguanine (preQ1-tRNA) to give epoxyqueuosine (oQ-tRNA). The chain is S-adenosylmethionine:tRNA ribosyltransferase-isomerase from Beijerinckia indica subsp. indica (strain ATCC 9039 / DSM 1715 / NCIMB 8712).